A 440-amino-acid polypeptide reads, in one-letter code: Argininosuccinate lyase (440 aa).

It belongs to the lyase 1 family. Argininosuccinate lyase subfamily.

It is found in the cytoplasm. The enzyme catalyses 2-(N(omega)-L-arginino)succinate = fumarate + L-arginine. It functions in the pathway amino-acid biosynthesis; L-arginine biosynthesis; L-arginine from L-ornithine and carbamoyl phosphate: step 3/3. The chain is Argininosuccinate lyase from Clostridium botulinum (strain 657 / Type Ba4).